Consider the following 416-residue polypeptide: Lipase A (416 aa).

The N-terminal stretch at 1 to 32 (MRLAPQKPLLLSTVLHLLLSIWMLGFASLAGA) is a signal peptide. 2 disulfide bridges follow: cysteine 67-cysteine 391 and cysteine 177-cysteine 180. Asparagine 179 is a glycosylation site (N-linked (GlcNAc...) asparagine). The active-site Nucleophile is serine 219. Active-site charge relay system residues include aspartate 287 and histidine 381.

Belongs to the AB hydrolase superfamily. Lipase family. Post-translationally, glycosylated.

It is found in the secreted. It carries out the reaction Deacetylation of xylans and xylo-oligosaccharides.. It catalyses the reaction a triacylglycerol + H2O = a diacylglycerol + a fatty acid + H(+). Its function is as follows. Lipolytic enzyme that possesses both lipase and acetylxylan esterase activity. Active towards p-nitrophenol esters of various carbon chain length with preference for medium-chain fatty acids (C-8). Also highly active on the acetylated compounds xylose tetra-acetate and oat spelt xylan. The protein is Lipase A of Sodiomyces alcalophilus (Acremonium alcalophilum).